We begin with the raw amino-acid sequence, 582 residues long: Phosphoglucomutase, cytoplasmic (582 aa).

2 residues coordinate alpha-D-glucose 1,6-bisphosphate: Arg25 and Ser124. The active-site Phosphoserine intermediate is Ser124. Positions 124, 300, 302, and 304 each coordinate Mg(2+). Ser124 is subject to Phosphoserine. Alpha-D-glucose 1,6-bisphosphate contacts are provided by Asp304, Arg305, Thr368, Glu387, Ser389, and Lys400.

It belongs to the phosphohexose mutase family. Monomer. Mg(2+) is required as a cofactor.

Its subcellular location is the cytoplasm. The enzyme catalyses alpha-D-glucose 1-phosphate = alpha-D-glucose 6-phosphate. The catalysed reaction is O-phospho-L-seryl-[protein] + alpha-D-glucose 1-phosphate = alpha-D-glucose 1,6-bisphosphate + L-seryl-[protein]. It carries out the reaction alpha-D-glucose 1,6-bisphosphate + L-seryl-[protein] = O-phospho-L-seryl-[protein] + alpha-D-glucose 6-phosphate. In terms of biological role, catalyzes the reversible isomerization of alpha-D-glucose 1-phosphate to alpha-D-glucose 6-phosphate. The mechanism proceeds via the intermediate compound alpha-D-glucose 1,6-bisphosphate. This enzyme participates in both the breakdown and synthesis of glucose. This is Phosphoglucomutase, cytoplasmic (PGM1) from Pisum sativum (Garden pea).